The sequence spans 264 residues: Elongation factor Ts (264 aa).

Residues 76–79 (TDFV) are involved in Mg(2+) ion dislocation from EF-Tu.

The protein belongs to the EF-Ts family.

It localises to the cytoplasm. In terms of biological role, associates with the EF-Tu.GDP complex and induces the exchange of GDP to GTP. It remains bound to the aminoacyl-tRNA.EF-Tu.GTP complex up to the GTP hydrolysis stage on the ribosome. The polypeptide is Elongation factor Ts (Deinococcus deserti (strain DSM 17065 / CIP 109153 / LMG 22923 / VCD115)).